The sequence spans 306 residues: Formimidoylglutamase (306 aa).

Residues Met1 to Thr13 show a composition bias toward polar residues. The segment at Met1 to Tyr36 is disordered. Residues Asn123, Asp147, His149, Asp151, Asp234, and Asp236 each contribute to the Mn(2+) site.

It belongs to the arginase family. It depends on Mn(2+) as a cofactor.

It carries out the reaction N-formimidoyl-L-glutamate + H2O = formamide + L-glutamate. It functions in the pathway amino-acid degradation; L-histidine degradation into L-glutamate; L-glutamate from N-formimidoyl-L-glutamate (hydrolase route): step 1/1. Catalyzes the conversion of N-formimidoyl-L-glutamate to L-glutamate and formamide. This is Formimidoylglutamase from Halobacterium salinarum (strain ATCC 29341 / DSM 671 / R1).